Consider the following 737-residue polypeptide: Exostosin-1c (737 aa).

The Cytoplasmic segment spans residues 1-6 (MQARKK). A helical; Signal-anchor for type II membrane protein membrane pass occupies residues 7–27 (YVLLGLCTCCWILLYYWAGLQ). Topologically, residues 28–737 (ERLLGLITHR…RKRYKDLERV (710 aa)) are lumenal. Asn-194 and Asn-322 each carry an N-linked (GlcNAc...) asparagine glycan. UDP-N-acetyl-alpha-D-glucosamine is bound by residues Arg-432, Arg-540, Asp-556, Glu-557, Asp-558, Glu-644, Asp-645, and Arg-692. Asp-558 lines the Mn(2+) pocket. A disulfide bridge connects residues Cys-643 and Cys-695. Residue Asp-645 is part of the active site.

The protein belongs to the glycosyltransferase 47 family. Mn(2+) is required as a cofactor.

It localises to the endoplasmic reticulum membrane. The enzyme catalyses 3-O-{[(1-&gt;4)-beta-D-GlcA-(1-&gt;4)-alpha-D-GlcNAc](n)-(1-&gt;4)-beta-D-GlcA-(1-&gt;3)-beta-D-Gal-(1-&gt;3)-beta-D-Gal-(1-&gt;4)-beta-D-Xyl}-L-seryl-[protein] + UDP-N-acetyl-alpha-D-glucosamine = 3-O-{alpha-D-GlcNAc-[(1-&gt;4)-beta-D-GlcA-(1-&gt;4)-alpha-D-GlcNAc](n)-(1-&gt;4)-beta-D-GlcA-(1-&gt;3)-beta-D-Gal-(1-&gt;3)-beta-D-Gal-(1-&gt;4)-beta-D-Xyl}-L-seryl-[protein] + UDP + H(+). It catalyses the reaction 3-O-{alpha-D-GlcNAc-[(1-&gt;4)-beta-D-GlcA-(1-&gt;4)-alpha-D-GlcNAc](n)-(1-&gt;4)-beta-D-GlcA-(1-&gt;3)-beta-D-Gal-(1-&gt;3)-beta-D-Gal-(1-&gt;4)-beta-D-Xyl}-L-seryl-[protein] + UDP-alpha-D-glucuronate = 3-O-{[(1-&gt;4)-beta-D-GlcA-(1-&gt;4)-alpha-D-GlcNAc](n+1)-(1-&gt;4)-beta-D-GlcA-(1-&gt;3)-beta-D-Gal-(1-&gt;3)-beta-D-Gal-(1-&gt;4)-beta-D-Xyl}-L-seryl-[protein] + UDP + H(+). Its pathway is protein modification; protein glycosylation. In terms of biological role, glycosyltransferase required for the biosynthesis of heparan-sulfate. The chain is Exostosin-1c (ext1c) from Danio rerio (Zebrafish).